Consider the following 141-residue polypeptide: Large ribosomal subunit protein uL11 (141 aa).

The protein belongs to the universal ribosomal protein uL11 family. Part of the ribosomal stalk of the 50S ribosomal subunit. Interacts with L10 and the large rRNA to form the base of the stalk. L10 forms an elongated spine to which L12 dimers bind in a sequential fashion forming a multimeric L10(L12)X complex. In terms of processing, one or more lysine residues are methylated.

Functionally, forms part of the ribosomal stalk which helps the ribosome interact with GTP-bound translation factors. The sequence is that of Large ribosomal subunit protein uL11 from Prochlorococcus marinus (strain MIT 9312).